Reading from the N-terminus, the 159-residue chain is SsrA-binding protein (159 aa).

Basic and acidic residues predominate over residues 140–150 (RATEKERDWNR). The tract at residues 140–159 (RATEKERDWNRQKQRVLRQR) is disordered.

The protein belongs to the SmpB family.

The protein localises to the cytoplasm. Functionally, required for rescue of stalled ribosomes mediated by trans-translation. Binds to transfer-messenger RNA (tmRNA), required for stable association of tmRNA with ribosomes. tmRNA and SmpB together mimic tRNA shape, replacing the anticodon stem-loop with SmpB. tmRNA is encoded by the ssrA gene; the 2 termini fold to resemble tRNA(Ala) and it encodes a 'tag peptide', a short internal open reading frame. During trans-translation Ala-aminoacylated tmRNA acts like a tRNA, entering the A-site of stalled ribosomes, displacing the stalled mRNA. The ribosome then switches to translate the ORF on the tmRNA; the nascent peptide is terminated with the 'tag peptide' encoded by the tmRNA and targeted for degradation. The ribosome is freed to recommence translation, which seems to be the essential function of trans-translation. In Alcanivorax borkumensis (strain ATCC 700651 / DSM 11573 / NCIMB 13689 / SK2), this protein is SsrA-binding protein.